Consider the following 101-residue polypeptide: Small ribosomal subunit protein uS17 (101 aa).

It belongs to the universal ribosomal protein uS17 family. Part of the 30S ribosomal subunit.

Functionally, one of the primary rRNA binding proteins, it binds specifically to the 5'-end of 16S ribosomal RNA. This chain is Small ribosomal subunit protein uS17, found in Koribacter versatilis (strain Ellin345).